Here is a 151-residue protein sequence, read N- to C-terminus: Myosin catalytic light chain, smooth muscle (151 aa).

Position 1 is an N-acetylalanine (Ala1). EF-hand domains follow at residues 6–41 (DRITECQEAFELFDRSAEGKVFLGQVGDILRALGQN), 83–118 (GSYEDFVEGLRVFDKENNGKIMGAELRHVLSTLGEK), and 119–151 (MSEEEVEESLLQGQQDPNGCIHYEEFSKYLLEG).

In terms of biological role, in molluscan muscle, calcium regulation is associated with myosin rather than with actin. Muscle myosin contains two types of light chains: the catalytic light chain, essential for ATPase activity, and the regulatory light chain, a calcium-binding protein responsible for Ca(2+) dependent binding and Ca(2+) dependent Mg-ATPase activity. The chain is Myosin catalytic light chain, smooth muscle from Halocynthia roretzi (Sea squirt).